The sequence spans 238 residues: Probable amino-acid ABC transporter permease protein y4tF (238 aa).

The 195-residue stretch at A29 to M223 folds into the ABC transmembrane type-1 domain. Transmembrane regions (helical) follow at residues I33–G53, L77–I97, P103–V123, V152–A172, and T203–M223.

The protein belongs to the binding-protein-dependent transport system permease family. HisMQ subfamily.

The protein localises to the cell inner membrane. Its function is as follows. Probably part of the binding-protein-dependent transport system y4tEFGH for an amino acid. Probably responsible for the translocation of the substrate across the membrane. This chain is Probable amino-acid ABC transporter permease protein y4tF, found in Sinorhizobium fredii (strain NBRC 101917 / NGR234).